A 779-amino-acid polypeptide reads, in one-letter code: Ribonucleoside-diphosphate reductase large subunit (779 aa).

Substrate-binding positions include S178, 193 to 194 (SC), G222, 420 to 424 (NLCIE), and 614 to 618 (PTATS). A disulfide bridge connects residues C194 and C440. Catalysis depends on N420, which acts as the Proton acceptor. Residue C422 is the Cysteine radical intermediate of the active site. Catalysis depends on E424, which acts as the Proton acceptor.

Belongs to the ribonucleoside diphosphate reductase large chain family. Heterotetramer composed of a homodimer of the large subunit (R1) and a homodimer of the small subunit (R2). Larger multisubunit protein complex are also active, composed of (R1)n(R2)n.

It catalyses the reaction a 2'-deoxyribonucleoside 5'-diphosphate + [thioredoxin]-disulfide + H2O = a ribonucleoside 5'-diphosphate + [thioredoxin]-dithiol. Its activity is regulated as follows. Under complex allosteric control mediated by deoxynucleoside triphosphates and ATP binding. The type of nucleotide bound at the specificity site determines substrate preference. It seems probable that ATP makes the enzyme reduce CDP and UDP, dGTP favors ADP reduction and dTTP favors GDP reduction. In terms of biological role, ribonucleoside-diphosphate reductase holoenzyme provides the precursors necessary for viral DNA synthesis. Allows virus growth in non-dividing cells. Catalyzes the biosynthesis of deoxyribonucleotides from the corresponding ribonucleotides. This chain is Ribonucleoside-diphosphate reductase large subunit, found in Ornithodoros (relapsing fever ticks).